A 349-amino-acid chain; its full sequence is 4-hydroxy-3-methylbut-2-en-1-yl diphosphate synthase (flavodoxin) (349 aa).

The [4Fe-4S] cluster site is built by Cys264, Cys267, Cys299, and Glu306.

The protein belongs to the IspG family. Requires [4Fe-4S] cluster as cofactor.

It catalyses the reaction (2E)-4-hydroxy-3-methylbut-2-enyl diphosphate + oxidized [flavodoxin] + H2O + 2 H(+) = 2-C-methyl-D-erythritol 2,4-cyclic diphosphate + reduced [flavodoxin]. It functions in the pathway isoprenoid biosynthesis; isopentenyl diphosphate biosynthesis via DXP pathway; isopentenyl diphosphate from 1-deoxy-D-xylulose 5-phosphate: step 5/6. Converts 2C-methyl-D-erythritol 2,4-cyclodiphosphate (ME-2,4cPP) into 1-hydroxy-2-methyl-2-(E)-butenyl 4-diphosphate. In Clostridium tetani (strain Massachusetts / E88), this protein is 4-hydroxy-3-methylbut-2-en-1-yl diphosphate synthase (flavodoxin).